We begin with the raw amino-acid sequence, 642 residues long: Transcription factor 4 (642 aa).

Residues 1-25 (MFSPPVSSGKNGPTSLASGHFTGSN) show a composition bias toward polar residues. Residues 1–59 (MFSPPVSSGKNGPTSLASGHFTGSNVEDRSSSGSWGNGGHPSPSRNYGDGTPYDHMTSR) are essential for MYOD1 inhibition. Disordered stretches follow at residues 1–296 (MFSP…SQTG), 311–354 (HTNN…EGPL), 444–545 (PNQV…MANN), and 609–642 (KRREEEKVSSEPPPLSLAGPHPGMGDASNHMGQM). Residues serine 42, serine 63, and serine 68 each carry the phosphoserine modification. Polar residues-rich tracts occupy residues 83-98 (GSYSSYGRESNLQGCH), 112-130 (GTLSPTKPGSQYYQYSSNN), 181-191 (PAASTFPSSFF), 218-230 (GSSSHIPQSSSYC), and 241-281 (PSHS…TDSI). Positions 312-323 (TNNSFSSNPSTP) are enriched in low complexity. Residues 340–349 (NGGQASSSPN) are compositionally biased toward polar residues. At serine 347 the chain carries Phosphoserine. Residues 354 to 375 (LHSLQSRIEDRLERLDDAIHVL) form a leucine-zipper region. Composition is skewed to low complexity over residues 444-455 (PNQVPVPQLPVQ) and 478-487 (GQSVSSGSSE). Serine 490 carries the phosphoserine modification. Basic and acidic residues-rich tracts occupy residues 502–517 (KSSEDKKLDDDKKDIK) and 530–545 (PEQKAEREKERRMANN). Positions 539–592 (ERRMANNARERLRVRDINEAFKELGRMVQLHLKSDKPQTKLLILHQAVAVILSL) constitute a bHLH domain. A class A specific domain region spans residues 594 to 617 (QQVRERNLNPKAACLKRREEEKVS).

Efficient DNA binding requires dimerization with another bHLH protein. Forms homo- or heterooligomers with myogenin. Interacts with HIVEP2. Interacts with NEUROD2. Interacts with AGBL1. As to expression, widely expressed.

The protein resides in the nucleus. Functionally, transcription factor that binds to the immunoglobulin enhancer Mu-E5/KE5-motif. Involved in the initiation of neuronal differentiation. Activates transcription by binding to the E box (5'-CANNTG-3'). Binds to the thyroglobulin promoter. This is Transcription factor 4 (TCF4) from Canis lupus familiaris (Dog).